A 692-amino-acid polypeptide reads, in one-letter code: Phenoloxidase subunit 2 (692 aa).

Positions 1-97 (MTDRVKSLQL…PRHQEMATEV (97 aa)) are excised as a propeptide. The Cu cation site is built by H213, H217, and H243. 3 N-linked (GlcNAc...) asparagine glycosylation sites follow: N256, N295, and N309. E351 acts as the Proton acceptor in catalysis. Residues H366, H370, and H406 each contribute to the Cu cation site. N494 carries N-linked (GlcNAc...) asparagine glycosylation. Disulfide bonds link C583–C628 and C585–C635.

It belongs to the tyrosinase family. Heterodimer. Cu(2+) is required as a cofactor.

It is found in the secreted. The catalysed reaction is L-tyrosine + O2 = L-dopaquinone + H2O. The enzyme catalyses 2 L-dopa + O2 = 2 L-dopaquinone + 2 H2O. Copper-containing oxidase that functions in the formation of pigments such as melanins and other polyphenolic compounds. Catalyzes the rate-limiting conversions of tyrosine to DOPA, DOPA to DOPA-quinone and possibly 5,6 dihydroxyindole to indole-5'6 quinone. Binds to the surface of hemocytes and is involved in hemocyte melanization. Binds the A.niger cell wall component alpha-1,3-glucan, a fungal pathogen-associated molecular pattern (PAMP) that activates the host immune response. This Galleria mellonella (Greater wax moth) protein is Phenoloxidase subunit 2.